The chain runs to 429 residues: Glutamate-1-semialdehyde 2,1-aminomutase 1 (429 aa).

An N6-(pyridoxal phosphate)lysine modification is found at Lys267.

This sequence belongs to the class-III pyridoxal-phosphate-dependent aminotransferase family. HemL subfamily. As to quaternary structure, homodimer. The cofactor is pyridoxal 5'-phosphate.

It localises to the cytoplasm. It catalyses the reaction (S)-4-amino-5-oxopentanoate = 5-aminolevulinate. Its pathway is porphyrin-containing compound metabolism; protoporphyrin-IX biosynthesis; 5-aminolevulinate from L-glutamyl-tRNA(Glu): step 2/2. The protein is Glutamate-1-semialdehyde 2,1-aminomutase 1 of Bacillus velezensis (strain DSM 23117 / BGSC 10A6 / LMG 26770 / FZB42) (Bacillus amyloliquefaciens subsp. plantarum).